Reading from the N-terminus, the 329-residue chain is Serine dehydratase-like (329 aa).

Residue Met-1 is modified to N-acetylmethionine. The residue at position 48 (Lys-48) is an N6-(pyridoxal phosphate)lysine.

It belongs to the serine/threonine dehydratase family. Monomer. Homodimer. The cofactor is pyridoxal 5'-phosphate.

It catalyses the reaction L-serine = pyruvate + NH4(+). The enzyme catalyses L-threonine = 2-oxobutanoate + NH4(+). It carries out the reaction L-glutamate = D-glutamate. Its activity is regulated as follows. Serine dehydratase activity is inhibited by manganese chloride, ferrous chloride, cobalt chloride, cupric chloride, nickel chloride and zinc chloride. Glutamate racemase activity is inhibited by manganese chloride, ferrous chloride, cupric chloride and zinc chloride. Functionally, catalyzes the pyridoxal-phosphate-dependent dehydrative deamination of L-threonine and L-serine to ammonia and alpha-ketobutyrate and pyruvate, respectively. Also exhibits racemase activity towards L-glutamate and D-glutamate. The sequence is that of Serine dehydratase-like (Sdsl) from Rattus norvegicus (Rat).